A 321-amino-acid polypeptide reads, in one-letter code: Biotin synthase (321 aa).

The Radical SAM core domain occupies F45 to A271. C63, C67, and C70 together coordinate [4Fe-4S] cluster. 4 residues coordinate [2Fe-2S] cluster: C106, C139, C199, and R269.

This sequence belongs to the radical SAM superfamily. Biotin synthase family. Homodimer. [4Fe-4S] cluster serves as cofactor. Requires [2Fe-2S] cluster as cofactor.

It carries out the reaction (4R,5S)-dethiobiotin + (sulfur carrier)-SH + 2 reduced [2Fe-2S]-[ferredoxin] + 2 S-adenosyl-L-methionine = (sulfur carrier)-H + biotin + 2 5'-deoxyadenosine + 2 L-methionine + 2 oxidized [2Fe-2S]-[ferredoxin]. Its pathway is cofactor biosynthesis; biotin biosynthesis; biotin from 7,8-diaminononanoate: step 2/2. Catalyzes the conversion of dethiobiotin (DTB) to biotin by the insertion of a sulfur atom into dethiobiotin via a radical-based mechanism. The protein is Biotin synthase of Staphylococcus haemolyticus (strain JCSC1435).